Consider the following 191-residue polypeptide: Thymidylate kinase (191 aa).

7 to 14 (GVDGVGKS) lines the ATP pocket.

Belongs to the thymidylate kinase family.

It carries out the reaction dTMP + ATP = dTDP + ADP. Phosphorylation of dTMP to form dTDP in both de novo and salvage pathways of dTTP synthesis. This is Thymidylate kinase from Helicobacter pylori (strain HPAG1).